The primary structure comprises 617 residues: Electron transfer flavoprotein-ubiquinone oxidoreductase, mitochondrial (617 aa).

The transit peptide at 1 to 33 (MLVPLAKLSCPAYQCFHALKIKKNYLPLCATRW) directs the protein to the mitochondrion. 71 to 85 (VVIVGAGPAGLSAAV) serves as a coordination point for FAD. K96 is modified (N6-acetyllysine). Residues 109–130 (IGAHTLSGACLDPGAFKELFPD) lie within the membrane without spanning it. Residues K132 and K223 each carry the N6-acetyllysine modification. A ubiquinone contacts are provided by G305 and G306. Residue K357 is modified to N6-acetyllysine. An intramembrane segment occupies 428 to 447 (MGLHVTEYEDNLKNSWVWKE). Residue S551 is modified to Phosphoserine. 4 residues coordinate [4Fe-4S] cluster: C561, C586, C589, and C592. One can recognise a 4Fe-4S ferredoxin-type domain in the interval 577-606 (FRLQINAQNCVHCKTCDIKDPSQNINWVVP).

It belongs to the ETF-QO/FixC family. Monomer. Requires [4Fe-4S] cluster as cofactor. The cofactor is FAD.

It localises to the mitochondrion inner membrane. The catalysed reaction is a ubiquinone + reduced [electron-transfer flavoprotein] = a ubiquinol + oxidized [electron-transfer flavoprotein] + H(+). Its function is as follows. Accepts electrons from ETF and reduces ubiquinone. The chain is Electron transfer flavoprotein-ubiquinone oxidoreductase, mitochondrial (ETFDH) from Pongo abelii (Sumatran orangutan).